The chain runs to 106 residues: Transcriptional and immune response regulator (106 aa).

Monomer. Interacts with NOTCH2 (via ANK repeats), the interaction inhibits the nuclear translocation of NOTCH2 N2ICD. Interacts (C-terminus) with CBY1 (C-terminus), TCIM competes with CTNNB1 for the interaction with CBY1. Ubiquitous. Expressed in thyroid papillary carcinoma. Expressed in liver, expression levels decrease in hepatocellular carcinoma. Slightly detected in normal lung, its expression is highly induced in lung cancer cells (at protein level).

The protein resides in the cytoplasm. The protein localises to the nucleus. It localises to the nucleolus. Its subcellular location is the nucleus speckle. Functionally, seems to be involved in the regulation of cell growth an differentiation, may play different and opposite roles depending on the tissue or cell type. May enhance the WNT-CTNNB1 pathway by relieving antagonistic activity of CBY1. Enhances the proliferation of follicular dendritic cells. Plays a role in the mitogen-activated MAPK2/3 signaling pathway, positively regulates G1-to-S-phase transition of the cell cycle. In endothelial cells, enhances key inflammatory mediators and inflammatory response through the modulation of NF-kappaB transcriptional regulatory activity. Involved in the regulation of heat shock response, seems to play a positive feedback with HSF1 to modulate heat-shock downstream gene expression. Plays a role in the regulation of hematopoiesis even if the mechanisms are unknown. In cancers such as thyroid or lung cancer, it has been described as promoter of cell proliferation, G1-to-S-phase transition and inhibitor of apoptosis. However, it negatively regulates self-renewal of liver cancer cells via suppresion of NOTCH2 signaling. This is Transcriptional and immune response regulator from Homo sapiens (Human).